The sequence spans 1081 residues: Protein QUIRKY (1081 aa).

The 124-residue stretch at 1–124 folds into the C2 1 domain; it reads MNTTPFHSDP…SRRGEEGLVY (124 aa). Disordered stretches follow at residues 154–198 and 238–323; these read DTAG…MNIP and PQHV…MEKK. Low complexity predominate over residues 163 to 176; it reads QQQQQQQQFHPPQQ. Residues 248–257 show a composition bias toward basic and acidic residues; sequence NHPHRNDNHP. The segment covering 258-268 has biased composition (pro residues); that stretch reads QRPPSPPPPPS. C2 domains are found at residues 318-440, 477-605, and 652-778; these read TTME…PQWY, SSDA…SKWH, and VCSD…TNSY. Residues Glu-351, Ser-352, Asp-408, and Ser-413 each coordinate Ca(2+). 3 helical membrane passes run 879 to 899, 916 to 936, and 1024 to 1044; these read WYRI…LDNI, LVLV…VVMI, and LFIA…AKMV.

It belongs to the MCTP family. In terms of assembly, interacts with SUB/SCM and POQ at the plasma membrane. Binds to SUB/SCM at plasmodesmata (PD) in root epidermal cells to promote tissue morphogenesis. Requires Ca(2+) as cofactor. In terms of tissue distribution, observed mainly in flowers, and, to a lower extent, in seedlings, roots, shoots, leaves, stems and inflorescences. Expressed in the vascular tissues of roots, cotyledons and rosette leaves. Accumulates in roots meristems.

The protein resides in the cell membrane. It is found in the cytoplasm. Its subcellular location is the golgi apparatus membrane. It localises to the cell junction. The protein localises to the plasmodesma. May be involved in Ca 2(+)-dependent signaling and membrane trafficking. Plays a role in fruit dehiscence. Components of the machinery involved in organ development mediated by the receptor-like kinase STRUBBELIG (SUB). Collaboratively with SUB and POQ, regulates cell growth anisotropy during gynoecium development, thus linking together cell-cell communication and cellular growth. Together with SUB/SCM, links RLK-dependent signal transduction and intercellular communication mediated by plasmodesmata (PD) to regulate tissue morphogenesis. May function as a signaling molecule by regulating the trafficking of other regulators. This Arabidopsis thaliana (Mouse-ear cress) protein is Protein QUIRKY.